A 79-amino-acid polypeptide reads, in one-letter code: Acyl carrier protein (79 aa).

Residues 2 to 77 form the Carrier domain; the sequence is SDVAERVKKI…DAVNFLEKAT (76 aa). Position 37 is an O-(pantetheine 4'-phosphoryl)serine (Ser-37).

It belongs to the acyl carrier protein (ACP) family. 4'-phosphopantetheine is transferred from CoA to a specific serine of apo-ACP by AcpS. This modification is essential for activity because fatty acids are bound in thioester linkage to the sulfhydryl of the prosthetic group.

Its subcellular location is the cytoplasm. The protein operates within lipid metabolism; fatty acid biosynthesis. Functionally, carrier of the growing fatty acid chain in fatty acid biosynthesis. This is Acyl carrier protein from Methylocella silvestris (strain DSM 15510 / CIP 108128 / LMG 27833 / NCIMB 13906 / BL2).